The chain runs to 116 residues: Large ribosomal subunit protein uL18 (116 aa).

Belongs to the universal ribosomal protein uL18 family. As to quaternary structure, part of the 50S ribosomal subunit; part of the 5S rRNA/L5/L18/L25 subcomplex. Contacts the 5S and 23S rRNAs.

Its function is as follows. This is one of the proteins that bind and probably mediate the attachment of the 5S RNA into the large ribosomal subunit, where it forms part of the central protuberance. The sequence is that of Large ribosomal subunit protein uL18 from Cellvibrio japonicus (strain Ueda107) (Pseudomonas fluorescens subsp. cellulosa).